We begin with the raw amino-acid sequence, 235 residues long: Large ribosomal subunit protein uL1 (235 aa).

Belongs to the universal ribosomal protein uL1 family. As to quaternary structure, part of the 50S ribosomal subunit.

Its function is as follows. Binds directly to 23S rRNA. The L1 stalk is quite mobile in the ribosome, and is involved in E site tRNA release. In terms of biological role, protein L1 is also a translational repressor protein, it controls the translation of the L11 operon by binding to its mRNA. The sequence is that of Large ribosomal subunit protein uL1 from Solidesulfovibrio magneticus (strain ATCC 700980 / DSM 13731 / RS-1) (Desulfovibrio magneticus).